The following is a 191-amino-acid chain: Large ribosomal subunit protein bL12cz (191 aa).

The N-terminal 58 residues, 1–58 (MASTTLSIATTIRSSSYPTLASINHFPSRTTTIEFPSRFGGGSSSTLTHRATHLRPIA), are a transit peptide targeting the chloroplast.

This sequence belongs to the bacterial ribosomal protein bL12 family.

The protein resides in the plastid. Its subcellular location is the chloroplast. The polypeptide is Large ribosomal subunit protein bL12cz (RPL12A) (Arabidopsis thaliana (Mouse-ear cress)).